The chain runs to 594 residues: Actin-histidine N-methyltransferase (594 aa).

A disordered region spans residues 1-22; that stretch reads MGKKSRVKTQKSGTGATATVSP. Residues 10-20 are compositionally biased toward polar residues; it reads QKSGTGATATV. Residues Arg-75, 104–106, Arg-254, 275–279, and 325–327 contribute to the S-adenosyl-L-methionine site; these read EGF, DMCNH, and SGF. The 221-residue stretch at 94–314 folds into the SET domain; the sequence is EGFEMVNFKE…AGEQIYIFYG (221 aa). Ser-513 carries the post-translational modification Phosphoserine. The interval 549 to 594 is disordered; that stretch reads ENGLVNGENSIPNGTRSENESLNQESKRAVEDAKGSSSDSTAGVKE. Residues 555 to 572 show a composition bias toward polar residues; that stretch reads GENSIPNGTRSENESLNQ. Positions 573–582 are enriched in basic and acidic residues; that stretch reads ESKRAVEDAK. A compositionally biased stretch (polar residues) spans 583-594; that stretch reads GSSSDSTAGVKE.

Belongs to the class V-like SAM-binding methyltransferase superfamily. SETD3 actin-histidine methyltransferase family. In terms of assembly, interacts with MYOD1. Post-translationally, phosphorylated by GSK3B, which is required for recognition by the SCF(FBXW7) complex and subsequent degradation. In terms of processing, ubiquitinated by the SCF(FBXW7) complex following phosphorylation by GSK3B, leading to its degradation by the proteasome.

It localises to the cytoplasm. The protein localises to the nucleus. The enzyme catalyses L-histidyl-[protein] + S-adenosyl-L-methionine = N(tele)-methyl-L-histidyl-[protein] + S-adenosyl-L-homocysteine + H(+). Its function is as follows. Protein-histidine N-methyltransferase that specifically mediates 3-methylhistidine (tele-methylhistidine) methylation of actin at 'His-73'. Histidine methylation of actin is required for smooth muscle contraction of the laboring uterus during delivery. Does not have protein-lysine N-methyltransferase activity and probably only catalyzes histidine methylation of actin. In Homo sapiens (Human), this protein is Actin-histidine N-methyltransferase.